Reading from the N-terminus, the 180-residue chain is Nucleoside triphosphate/diphosphate phosphatase (180 aa).

Arg-26 acts as the Proton donor in catalysis. Residues Asn-90, Asp-106, Asp-108, Asp-110, Asp-123, and Glu-126 each contribute to the Mg(2+) site.

Belongs to the Ntdp family. Requires Mg(2+) as cofactor.

The enzyme catalyses a ribonucleoside 5'-triphosphate + H2O = a ribonucleoside 5'-diphosphate + phosphate + H(+). It catalyses the reaction a ribonucleoside 5'-diphosphate + H2O = a ribonucleoside 5'-phosphate + phosphate + H(+). Has nucleoside phosphatase activity towards nucleoside triphosphates and nucleoside diphosphates. The protein is Nucleoside triphosphate/diphosphate phosphatase of Staphylococcus haemolyticus (strain JCSC1435).